A 313-amino-acid chain; its full sequence is MEKRKIILDCDPGHDDAIAIMMAAKHPAIDLLGITIVAGNQTLDKTLINGLNVCQKLEINVPVYAGMPQPIMRQQIVADNIHGETGLDGPVFEPLTRQAESTHAVKYIIDTLMASDGDITLVPVGPLSNIAVAMRMQPAILPKIREIVLMGGAYGTGNFTPSAEFNIFADPEAARVVFTSGVPLVMMGLDLTNQTVCTPDVIARMERAGGPAGEMFSDIMNFTLKTQFENYGLAGGPVHDATCIGYLINPDGIKTQEMYVEVDVNSGPCYGRTVCDELGVLGKPANTKVGITIDTDWFWGLVEECVRGYIKTH.

The active-site Proton acceptor is the aspartate 11. Aspartate 11, aspartate 16, and valine 124 together coordinate Ca(2+). Residues glutamine 227 and histidine 239 each contribute to the substrate site. Residue aspartate 240 coordinates Ca(2+).

This sequence belongs to the IUNH family. RihB subfamily. Homotetramer. It depends on Ca(2+) as a cofactor.

The enzyme catalyses a pyrimidine ribonucleoside + H2O = a pyrimidine nucleobase + D-ribose. Functionally, hydrolyzes cytidine or uridine to ribose and cytosine or uracil, respectively. Has a clear preference for cytidine over uridine. Strictly specific for ribonucleosides. The protein is Pyrimidine-specific ribonucleoside hydrolase RihB of Shigella sonnei (strain Ss046).